A 1004-amino-acid polypeptide reads, in one-letter code: Protein Wnt-5 (1004 aa).

The first 29 residues, 1 to 29, serve as a signal peptide directing secretion; sequence MSCYRKRHFLLWLLRAVCMLHLTARGAYA. Residues asparagine 60, asparagine 66, asparagine 115, and asparagine 219 are each glycosylated (N-linked (GlcNAc...) asparagine). A disordered region spans residues 238 to 298; it reads QKDKAKTSGA…NPGEQPIGGY (61 aa). 2 N-linked (GlcNAc...) asparagine glycosylation sites follow: asparagine 307 and asparagine 341. Residues 310-407 are disordered; that stretch reads LLKPTDTDSH…ERDEWFRGQS (98 aa). Over residues 389-403 the composition is skewed to basic and acidic residues; it reads RREEQQRQRERDEWF. N-linked (GlcNAc...) asparagine glycosylation occurs at asparagine 422. The disordered stretch occupies residues 438-472; that stretch reads KVSSEGSDGELLSRVERSQPSISSSSSSSSSSSRK. The span at 458 to 470 shows a compositional bias: low complexity; the sequence is SISSSSSSSSSSS. 4 N-linked (GlcNAc...) asparagine glycosylation sites follow: asparagine 484, asparagine 485, asparagine 528, and asparagine 593. 3 disulfide bridges follow: cysteine 583–cysteine 594, cysteine 633–cysteine 641, and cysteine 643–cysteine 661. A glycan (N-linked (GlcNAc...) asparagine) is linked at asparagine 724. Positions 790 to 822 are disordered; the sequence is FFKGEQQPRKKKRKNQRAAADAPAYPRNGIKES. 8 cysteine pairs are disulfide-bonded: cysteine 862–cysteine 876, cysteine 864–cysteine 871, cysteine 933–cysteine 964, cysteine 949–cysteine 959, cysteine 963–cysteine 1003, cysteine 979–cysteine 994, cysteine 981–cysteine 991, and cysteine 986–cysteine 987. A lipid anchor (O-palmitoleoyl serine; by PORCN) is attached at serine 868. The N-linked (GlcNAc...) asparagine glycan is linked to asparagine 952.

This sequence belongs to the Wnt family. In terms of assembly, interacts with porcupine (por). In terms of processing, glycosylated, glycosylation is stimulated by porcupine at the ER. Post-translationally, palmitoleoylated by porcupine. The lipid group functions as a sorting signal, targeting the ligand to polarized vesicles that transport Wnt5 to unique sites at the cell surface. Depalmitoleoylated by notum, leading to inhibit Wnt signaling pathway. As to expression, dynamic expression pattern during embryogenesis. Expression is seen in the limb primordia of the head and thoracic segments, mesodermal and neurogenic regions.

It is found in the secreted. The protein resides in the extracellular space. Its subcellular location is the extracellular matrix. Its function is as follows. Binds as a ligand to a family of frizzled seven-transmembrane receptors and acts through a cascade of genes on the nucleus. Probable developmental protein. May be a signaling molecule which affects the development of discrete regions of tissues. Is likely to signal over only few cell diameters. May have a role in limb and CNS development; may be a downstream target of Dll that acts in the specification of these primordia. The polypeptide is Protein Wnt-5 (Wnt5) (Drosophila melanogaster (Fruit fly)).